The chain runs to 1027 residues: Protein translocase subunit SecA (1027 aa).

Residues Gln-143, 161 to 165 (GEGKT), and Asp-661 each bind ATP. Positions 981 to 1027 (EESGTSNADNAGDNGPQTVIAEKKPGRNDLCPCGSGKKYKNCHGQQP) are disordered. Residues Cys-1011, Cys-1013, Cys-1022, and His-1023 each contribute to the Zn(2+) site.

Belongs to the SecA family. As to quaternary structure, monomer and homodimer. Part of the essential Sec protein translocation apparatus which comprises SecA, SecYEG and auxiliary proteins SecDF. Other proteins may also be involved. It depends on Zn(2+) as a cofactor.

The protein resides in the cell inner membrane. Its subcellular location is the cytoplasm. The catalysed reaction is ATP + H2O + cellular proteinSide 1 = ADP + phosphate + cellular proteinSide 2.. Functionally, part of the Sec protein translocase complex. Interacts with the SecYEG preprotein conducting channel. Has a central role in coupling the hydrolysis of ATP to the transfer of proteins into and across the cell membrane, serving as an ATP-driven molecular motor driving the stepwise translocation of polypeptide chains across the membrane. This chain is Protein translocase subunit SecA, found in Chlorobium limicola (strain DSM 245 / NBRC 103803 / 6330).